The primary structure comprises 283 residues: MQIITEPCQMQAVVEKLRLNRQLIGVVMTMGALHEGHLSLIKQARSLAGTVILTIFVNPKQFGPDEDFHRYPRPFELDASHAKAAGVDYLFAPSPEAIYPEGFQTTVQTGAVAEGLEGMKRPGHFNGVATVVTKLLLITKPHIALFGEKDAQQLAVINRLVRDLNLDVRIIGAPIVREENGLAVSSRNIYLSKEQRESATVLFRGILHAEKELAAGRTDLAGIAGEIERMIAGEPECRPDYVCFVHDNDFMTAETAEPAGEYRLLIAAYAGTVRLIDNRRFTT.

30-37 (MGALHEGH) contributes to the ATP binding site. Residue His-37 is the Proton donor of the active site. Gln-61 contacts (R)-pantoate. Gln-61 contacts beta-alanine. 147 to 150 (GEKD) serves as a coordination point for ATP. A (R)-pantoate-binding site is contributed by Gln-153. ATP-binding positions include Val-176 and 184 to 187 (VSSR).

It belongs to the pantothenate synthetase family. In terms of assembly, homodimer.

The protein localises to the cytoplasm. It catalyses the reaction (R)-pantoate + beta-alanine + ATP = (R)-pantothenate + AMP + diphosphate + H(+). The protein operates within cofactor biosynthesis; (R)-pantothenate biosynthesis; (R)-pantothenate from (R)-pantoate and beta-alanine: step 1/1. Functionally, catalyzes the condensation of pantoate with beta-alanine in an ATP-dependent reaction via a pantoyl-adenylate intermediate. The chain is Pantothenate synthetase from Chlorobium limicola (strain DSM 245 / NBRC 103803 / 6330).